The following is a 446-amino-acid chain: tRNA-2-methylthio-N(6)-dimethylallyladenosine synthase (446 aa).

Residues 3–120 (KKIYIKTFGC…LPEMLKQRRS (118 aa)) enclose the MTTase N-terminal domain. The [4Fe-4S] cluster site is built by cysteine 12, cysteine 49, cysteine 83, cysteine 157, cysteine 161, and cysteine 164. The Radical SAM core domain maps to 143 to 375 (KVEGATAFVS…QAVIDQNTRR (233 aa)). The region spanning 378-444 (DEMVGSVQRI…AYTLRGEIVV (67 aa)) is the TRAM domain.

The protein belongs to the methylthiotransferase family. MiaB subfamily. In terms of assembly, monomer. [4Fe-4S] cluster is required as a cofactor.

It localises to the cytoplasm. It catalyses the reaction N(6)-dimethylallyladenosine(37) in tRNA + (sulfur carrier)-SH + AH2 + 2 S-adenosyl-L-methionine = 2-methylsulfanyl-N(6)-dimethylallyladenosine(37) in tRNA + (sulfur carrier)-H + 5'-deoxyadenosine + L-methionine + A + S-adenosyl-L-homocysteine + 2 H(+). Its function is as follows. Catalyzes the methylthiolation of N6-(dimethylallyl)adenosine (i(6)A), leading to the formation of 2-methylthio-N6-(dimethylallyl)adenosine (ms(2)i(6)A) at position 37 in tRNAs that read codons beginning with uridine. This Herminiimonas arsenicoxydans protein is tRNA-2-methylthio-N(6)-dimethylallyladenosine synthase.